The primary structure comprises 269 residues: uncharacterized protein (269 aa).

Positions 14-89 constitute an ACT domain; the sequence is FEYEIQVNRP…KLREPRLRDR (76 aa).

This is an uncharacterized protein from Bacillus subtilis (strain 168).